We begin with the raw amino-acid sequence, 438 residues long: LIM domain-containing protein C4F6.12 (438 aa).

2 disordered regions span residues 1 to 37 (MHSP…NNLV) and 49 to 78 (TGGR…TIKQ). Residues 24–37 (SPVSTNGSPLNNLV) are compositionally biased toward polar residues. 2 positions are modified to phosphoserine: serine 67 and serine 96. LIM zinc-binding domains lie at 256–316 (KSCH…QFSP), 318–375 (CKHC…NKYA), and 376–435 (VKCK…SVKF).

This chain is LIM domain-containing protein C4F6.12, found in Schizosaccharomyces pombe (strain 972 / ATCC 24843) (Fission yeast).